We begin with the raw amino-acid sequence, 327 residues long: Phenylalanine--tRNA ligase alpha subunit (327 aa).

E252 is a Mg(2+) binding site.

Belongs to the class-II aminoacyl-tRNA synthetase family. Phe-tRNA synthetase alpha subunit type 1 subfamily. Tetramer of two alpha and two beta subunits. The cofactor is Mg(2+).

The protein resides in the cytoplasm. It carries out the reaction tRNA(Phe) + L-phenylalanine + ATP = L-phenylalanyl-tRNA(Phe) + AMP + diphosphate + H(+). The polypeptide is Phenylalanine--tRNA ligase alpha subunit (Cronobacter sakazakii (strain ATCC BAA-894) (Enterobacter sakazakii)).